We begin with the raw amino-acid sequence, 917 residues long: Protein translocase subunit SecA (917 aa).

ATP contacts are provided by residues Q87, 105–109, and D516; that span reads GEGKT. Zn(2+)-binding residues include C901, C903, C912, and H913.

It belongs to the SecA family. Monomer and homodimer. Part of the essential Sec protein translocation apparatus which comprises SecA, SecYEG and auxiliary proteins SecDF-YajC and YidC. Zn(2+) serves as cofactor.

Its subcellular location is the cell inner membrane. The protein resides in the cytoplasm. It catalyses the reaction ATP + H2O + cellular proteinSide 1 = ADP + phosphate + cellular proteinSide 2.. Its function is as follows. Part of the Sec protein translocase complex. Interacts with the SecYEG preprotein conducting channel. Has a central role in coupling the hydrolysis of ATP to the transfer of proteins into and across the cell membrane, serving both as a receptor for the preprotein-SecB complex and as an ATP-driven molecular motor driving the stepwise translocation of polypeptide chains across the membrane. This is Protein translocase subunit SecA from Acidovorax ebreus (strain TPSY) (Diaphorobacter sp. (strain TPSY)).